We begin with the raw amino-acid sequence, 349 residues long: Early nodulin-like protein 2 (349 aa).

Residues 1–28 form the signal peptide; the sequence is MTFLKMKSLSFFFTILLSLSTLFTISNA. A Phytocyanin domain is found at 29–130; the sequence is RKFNVGGSGA…GQKLNVVVIS (102 aa). Residues Cys84 and Cys118 are joined by a disulfide bond. The interval 136-330 is disordered; that stretch reads TAQSPHAAAP…GQKKSSANGM (195 aa). 2 stretches are compositionally biased toward low complexity: residues 145–201 and 224–234; these read PGSS…SPPG and TSPVSPSSAPM. Over residues 249 to 260 the composition is skewed to polar residues; the sequence is IPPSSAPMTSPP. The span at 263–312 shows a compositional bias: low complexity; that stretch reads MAPKSSSPVSNSPTVSPSLAPGGSTSSSPSDSPSGSAMGPSGDGPSAAGD. Ser325 carries GPI-anchor amidated serine lipidation. Positions 326 to 349 are cleaved as a propeptide — removed in mature form; the sequence is SANGMTVMSITTVLSLVLTIFLSA.

It belongs to the early nodulin-like (ENODL) family. Mostly expressed in leaves and roots, and, to a lower extent, in seedlings, stems and flowers, but barely in seeds.

The protein localises to the cell membrane. Functionally, may act as a carbohydrate transporter. This chain is Early nodulin-like protein 2, found in Arabidopsis thaliana (Mouse-ear cress).